The sequence spans 36 residues: Photosystem I reaction center subunit VIII (36 aa).

A helical membrane pass occupies residues 5-27; that stretch reads FLPSILVPLVGLVFPAIAIASLF.

It belongs to the PsaI family.

It localises to the plastid. The protein resides in the chloroplast thylakoid membrane. Its function is as follows. May help in the organization of the PsaL subunit. The chain is Photosystem I reaction center subunit VIII from Chaetosphaeridium globosum (Charophycean green alga).